The sequence spans 386 residues: SWI/SNF-related matrix-associated actin-dependent regulator of chromatin subfamily B member 1 (386 aa).

Positions 1 to 114 (MMMMALSKTF…DEKYKAVSIS (114 aa)) are DNA-binding.

The protein belongs to the SNF5 family. As to quaternary structure, component of the multiprotein chromatin-remodeling complexes SWI/SNF. Component of neural progenitors-specific chromatin remodeling complex (npBAF complex) and the neuron-specific chromatin remodeling complex (nBAF complex). Component of the BAF (SWI/SNF) chromatin remodeling complex. Component of the SWI/SNF-B (PBAF) chromatin remodeling complex. Binds to double-stranded DNA.

It is found in the nucleus. Involved in chromatin-remodeling. Core component of the BAF (SWI/SNF) complex. This ATP-dependent chromatin-remodeling complex plays important roles in cell proliferation and differentiation, in cellular antiviral activities and inhibition of tumor formation. Belongs to the neural progenitors-specific chromatin remodeling complex (npBAF complex) and the neuron-specific chromatin remodeling complex (nBAF complex) and may play a role in neural development. This chain is SWI/SNF-related matrix-associated actin-dependent regulator of chromatin subfamily B member 1 (SMARCB1), found in Gallus gallus (Chicken).